Here is a 243-residue protein sequence, read N- to C-terminus: 1-(5-phosphoribosyl)-5-[(5-phosphoribosylamino)methylideneamino] imidazole-4-carboxamide isomerase (243 aa).

The active-site Proton acceptor is the Asp-10. Asp-129 serves as the catalytic Proton donor.

This sequence belongs to the HisA/HisF family.

It localises to the cytoplasm. It carries out the reaction 1-(5-phospho-beta-D-ribosyl)-5-[(5-phospho-beta-D-ribosylamino)methylideneamino]imidazole-4-carboxamide = 5-[(5-phospho-1-deoxy-D-ribulos-1-ylimino)methylamino]-1-(5-phospho-beta-D-ribosyl)imidazole-4-carboxamide. It participates in amino-acid biosynthesis; L-histidine biosynthesis; L-histidine from 5-phospho-alpha-D-ribose 1-diphosphate: step 4/9. In Saccharopolyspora erythraea (strain ATCC 11635 / DSM 40517 / JCM 4748 / NBRC 13426 / NCIMB 8594 / NRRL 2338), this protein is 1-(5-phosphoribosyl)-5-[(5-phosphoribosylamino)methylideneamino] imidazole-4-carboxamide isomerase.